A 159-amino-acid chain; its full sequence is 3-hydroxyacyl-[acyl-carrier-protein] dehydratase FabZ (159 aa).

Histidine 58 is an active-site residue.

Belongs to the thioester dehydratase family. FabZ subfamily.

Its subcellular location is the cytoplasm. The catalysed reaction is a (3R)-hydroxyacyl-[ACP] = a (2E)-enoyl-[ACP] + H2O. In terms of biological role, involved in unsaturated fatty acids biosynthesis. Catalyzes the dehydration of short chain beta-hydroxyacyl-ACPs and long chain saturated and unsaturated beta-hydroxyacyl-ACPs. The protein is 3-hydroxyacyl-[acyl-carrier-protein] dehydratase FabZ of Helicobacter pylori (strain P12).